The chain runs to 350 residues: Glutamyl-tRNA reductase (350 aa).

Residues 53 to 56 (TCNR), serine 105, 110 to 112 (ETQ), and glutamine 116 contribute to the substrate site. Cysteine 54 functions as the Nucleophile in the catalytic mechanism. 185–190 (GAGETA) lines the NADP(+) pocket.

Belongs to the glutamyl-tRNA reductase family. In terms of assembly, homodimer.

The enzyme catalyses (S)-4-amino-5-oxopentanoate + tRNA(Glu) + NADP(+) = L-glutamyl-tRNA(Glu) + NADPH + H(+). It functions in the pathway porphyrin-containing compound metabolism; protoporphyrin-IX biosynthesis; 5-aminolevulinate from L-glutamyl-tRNA(Glu): step 1/2. Functionally, catalyzes the NADPH-dependent reduction of glutamyl-tRNA(Glu) to glutamate 1-semialdehyde (GSA). The sequence is that of Glutamyl-tRNA reductase from Deinococcus radiodurans (strain ATCC 13939 / DSM 20539 / JCM 16871 / CCUG 27074 / LMG 4051 / NBRC 15346 / NCIMB 9279 / VKM B-1422 / R1).